Consider the following 344-residue polypeptide: Arginine N-succinyltransferase (344 aa).

Residue Leu-125 participates in succinyl-CoA binding. The Proton donor role is filled by His-229.

It belongs to the arginine N-succinyltransferase family.

It catalyses the reaction succinyl-CoA + L-arginine = N(2)-succinyl-L-arginine + CoA + H(+). It participates in amino-acid degradation; L-arginine degradation via AST pathway; L-glutamate and succinate from L-arginine: step 1/5. Catalyzes the transfer of succinyl-CoA to arginine to produce N(2)-succinylarginine. The protein is Arginine N-succinyltransferase of Salmonella agona (strain SL483).